A 193-amino-acid chain; its full sequence is Superoxide dismutase [Fe] (193 aa).

Histidine 27 lines the Fe cation pocket. Lysine 51 carries the post-translational modification N6-acetyllysine. The Fe cation site is built by histidine 74, aspartate 157, and histidine 161.

It belongs to the iron/manganese superoxide dismutase family. Homodimer. Requires Fe cation as cofactor.

The enzyme catalyses 2 superoxide + 2 H(+) = H2O2 + O2. Its function is as follows. Destroys superoxide anion radicals which are normally produced within the cells and which are toxic to biological systems. The polypeptide is Superoxide dismutase [Fe] (sodB) (Escherichia coli O157:H7).